A 197-amino-acid chain; its full sequence is Putative mediator of RNA polymerase II transcription subunit 9 (197 aa).

Positions 83-117 (GINRSLENQEELLKTYKQTLKKKVELLEKLKKLEI) form a coiled coil. Residues 126–144 (STSSQSPQIQSKLELQTEL) are compositionally biased toward polar residues. Residues 126-197 (STSSQSPQIQ…KETTEDIMKE (72 aa)) form a disordered region. Residues 145-182 (SQTEPSQTEPSQTEPSQTEPSQTESSQIESSQIESSQT) are compositionally biased toward low complexity. The segment covering 183–197 (ETEKSKETTEDIMKE) has biased composition (basic and acidic residues).

This sequence belongs to the Mediator complex subunit 9 family. Component of the Mediator complex.

The protein localises to the nucleus. Component of the Mediator complex, a coactivator involved in the regulated transcription of nearly all RNA polymerase II-dependent genes. Mediator functions as a bridge to convey information from gene-specific regulatory proteins to the basal RNA polymerase II transcription machinery. Mediator is recruited to promoters by direct interactions with regulatory proteins and serves as a scaffold for the assembly of a functional preinitiation complex with RNA polymerase II and the general transcription factors. This is Putative mediator of RNA polymerase II transcription subunit 9 (med9) from Dictyostelium discoideum (Social amoeba).